The following is a 396-amino-acid chain: Elongation factor Tu (396 aa).

The tr-type G domain occupies 10–206; that stretch reads KPHVNVGTIG…ALDSYIPEPT (197 aa). Positions 19-26 are G1; it reads GHVDHGKT. 19 to 26 lines the GTP pocket; it reads GHVDHGKT. Mg(2+) is bound at residue T26. A G2 region spans residues 60–64; sequence GITIS. The G3 stretch occupies residues 81-84; that stretch reads DCPG. GTP contacts are provided by residues 81–85 and 136–139; these read DCPGH and NKAD. Residues 136 to 139 are G4; the sequence is NKAD. The tract at residues 174–176 is G5; it reads SAL.

The protein belongs to the TRAFAC class translation factor GTPase superfamily. Classic translation factor GTPase family. EF-Tu/EF-1A subfamily. In terms of assembly, monomer.

The protein localises to the cytoplasm. The catalysed reaction is GTP + H2O = GDP + phosphate + H(+). Its function is as follows. GTP hydrolase that promotes the GTP-dependent binding of aminoacyl-tRNA to the A-site of ribosomes during protein biosynthesis. This chain is Elongation factor Tu, found in Hydrogenovibrio crunogenus (strain DSM 25203 / XCL-2) (Thiomicrospira crunogena).